The chain runs to 1056 residues: Multidrug resistance protein MdtB (1056 aa).

12 helical membrane-spanning segments follow: residues 16-36, 342-362, 373-393, 396-416, 440-460, 472-492, 537-557, 869-889, 890-910, 911-931, 968-988, and 1002-1022; these read FILR…AGII, DVQF…YVFL, IAVP…GFSV, LTLM…IVVI, IGFT…PLLF, FAIT…TLTP, WITL…YLTI, LILA…ESFI, HPVT…LALM, VGGY…IGIV, ILMT…STGI, and GGLI…YLLF. The segment at 1037–1056 is disordered; it reads LQSQNQRELDHSPVNHQEPL. The span at 1043 to 1056 shows a compositional bias: basic and acidic residues; it reads RELDHSPVNHQEPL.

The protein belongs to the resistance-nodulation-cell division (RND) (TC 2.A.6) family. MdtB subfamily. Part of a tripartite efflux system composed of MdtA, MdtB and MdtC. MdtB forms a heteromultimer with MdtC.

The protein localises to the cell inner membrane. This is Multidrug resistance protein MdtB from Xenorhabdus bovienii (strain SS-2004) (Xenorhabdus nematophila subsp. bovienii).